The following is a 988-amino-acid chain: Chitin synthase 1 (988 aa).

The segment at 29 to 75 (QHHWPPSSGSSLGRAPSIPLSSSNPRSPIRPSTPSRVSTDWTRPPAP) is disordered. Positions 44-66 (PSIPLSSSNPRSPIRPSTPSRVS) are enriched in low complexity. The next 7 membrane-spanning stretches (helical) occupy residues 577–596 (WLNG…KQIW), 616–636 (FISL…FYFV), 656–676 (IFVI…ILSL), 732–752 (IFTN…LMSF), 764–784 (SAQY…YAFC), 864–884 (YVVA…SEAY), and 911–931 (AIGS…EGRI). The disordered stretch occupies residues 950–988 (AGLGSGFSESGKTGITSGSGMSGMSLSDVTSKISEKLAG). Positions 957-976 (SESGKTGITSGSGMSGMSLS) are enriched in low complexity.

Belongs to the chitin synthase family. Class II subfamily.

Its subcellular location is the cell membrane. It carries out the reaction [(1-&gt;4)-N-acetyl-beta-D-glucosaminyl](n) + UDP-N-acetyl-alpha-D-glucosamine = [(1-&gt;4)-N-acetyl-beta-D-glucosaminyl](n+1) + UDP + H(+). Polymerizes chitin, a structural polymer of the cell wall and septum, by transferring the sugar moiety of UDP-GlcNAc to the non-reducing end of the growing chitin polymer. CHS1 mainly responsible for normal yeast cell reproductive growth. The polypeptide is Chitin synthase 1 (Exophiala dermatitidis (Black yeast-like fungus)).